Here is a 177-residue protein sequence, read N- to C-terminus: DELTA-stichotoxin-Hcr4b (177 aa).

The interval 3–12 (ALAGTITLGA) is plays an important role in the hemolytic activity. The interval 11 to 30 (GASLGFQILDKVLGELGKVS) is N-terminal region. Phosphocholine contacts are provided by Ser54, Val87, Ser105, Pro107, Tyr133, Tyr137, and Tyr138. Residues 105 to 120 (SVPFDYNLYSNWWDVK) form a trp-rich region, which is important for the binding to lipid membrane region.

The protein belongs to the actinoporin family. Sea anemone subfamily. As to quaternary structure, octamer or nonamer in membranes. Monomer in the soluble state.

It is found in the secreted. The protein resides in the nematocyst. It localises to the target cell membrane. Its function is as follows. Pore-forming protein that forms cations-selective hydrophilic pores of around 1 nm and causes cardiac stimulation and cytolysis. Pore formation is a multi-step process that involves specific recognition of membrane sphingomyelin (but neither cholesterol nor phosphatidylcholine) using aromatic rich region and adjacent phosphocholine (POC) binding site, firm binding to the membrane (mainly driven by hydrophobic interactions) accompanied by the transfer of the N-terminal region to the lipid-water interface and finally pore formation after oligomerization of monomers. Cytolytic effects include red blood cells hemolysis, platelet aggregation and lysis, cytotoxic and cytostatic effects on fibroblasts. Lethality in mammals has been ascribed to severe vasospasm of coronary vessels, cardiac arrhythmia, and inotropic effects. Preincubation with exogenous sphingomyeline causes complete loss of hemolytic activity. The protein is DELTA-stichotoxin-Hcr4b of Radianthus crispa (Leathery sea anemone).